A 130-amino-acid polypeptide reads, in one-letter code: Small ribosomal subunit protein uS9 (130 aa).

This sequence belongs to the universal ribosomal protein uS9 family.

This Desulfovibrio desulfuricans (strain ATCC 27774 / DSM 6949 / MB) protein is Small ribosomal subunit protein uS9.